Consider the following 194-residue polypeptide: Small ribosomal subunit protein uS7 (194 aa).

The protein belongs to the universal ribosomal protein uS7 family. As to quaternary structure, part of the 30S ribosomal subunit.

One of the primary rRNA binding proteins, it binds directly to 16S rRNA where it nucleates assembly of the head domain of the 30S subunit. Is located at the subunit interface close to the decoding center. This chain is Small ribosomal subunit protein uS7, found in Archaeoglobus fulgidus (strain ATCC 49558 / DSM 4304 / JCM 9628 / NBRC 100126 / VC-16).